We begin with the raw amino-acid sequence, 321 residues long: Urease accessory protein UreD (321 aa).

Belongs to the UreD family. As to quaternary structure, ureD, UreF and UreG form a complex that acts as a GTP-hydrolysis-dependent molecular chaperone, activating the urease apoprotein by helping to assemble the nickel containing metallocenter of UreC. The UreE protein probably delivers the nickel.

Its subcellular location is the cytoplasm. In terms of biological role, required for maturation of urease via the functional incorporation of the urease nickel metallocenter. The polypeptide is Urease accessory protein UreD (Yersinia pseudotuberculosis serotype O:1b (strain IP 31758)).